A 500-amino-acid polypeptide reads, in one-letter code: MSIVDVRTPDPKRFIPGATGDWEVIIGMEVHAQVLSNSKLFSGASTEFGSEPNANVSLVDAAMPGMLPVINEECVKQAVRTGLGLKAKINNRSIFDRKNYFYPDLPQGYQISQYKDPIVGEGKIIISVGPDRQGHFEDVEIGIERLHLEQDAGKSMHDQHPAMSYVDLNRSGVALMEIVSKPDLRSSDEAKAYLTKLRSILRYLGTCDGNMDEGSMRADVNVSVRRPGEAFGTRCEIKNVNSIRFVGQAIEYEARRQIAILEDGGAIDQETRLFDPGKGETRSMRSKEDAHDYRYFPDPDLLPLEFDDAFVEALKAHLPELPDDKKERFVRDLGLSVYDASVLVSEKAIADYFEAVAAGRDGKTAANWVINDLLGALNKAGKPIEGTPVSPAQLGGIIDLIKDGTISGKLAKDLFEIVWNEGGDPAQIVESRGMKQVTDTGAIEKAVDEIIAANPDQVEKAKAKPSLAGWFVGQVMKATGGKANPQAVQALVKSKLGFEE.

Belongs to the GatB/GatE family. GatB subfamily. Heterotrimer of A, B and C subunits.

It catalyses the reaction L-glutamyl-tRNA(Gln) + L-glutamine + ATP + H2O = L-glutaminyl-tRNA(Gln) + L-glutamate + ADP + phosphate + H(+). It carries out the reaction L-aspartyl-tRNA(Asn) + L-glutamine + ATP + H2O = L-asparaginyl-tRNA(Asn) + L-glutamate + ADP + phosphate + 2 H(+). Its function is as follows. Allows the formation of correctly charged Asn-tRNA(Asn) or Gln-tRNA(Gln) through the transamidation of misacylated Asp-tRNA(Asn) or Glu-tRNA(Gln) in organisms which lack either or both of asparaginyl-tRNA or glutaminyl-tRNA synthetases. The reaction takes place in the presence of glutamine and ATP through an activated phospho-Asp-tRNA(Asn) or phospho-Glu-tRNA(Gln). This Sinorhizobium medicae (strain WSM419) (Ensifer medicae) protein is Aspartyl/glutamyl-tRNA(Asn/Gln) amidotransferase subunit B.